The chain runs to 339 residues: Putative phosphate acyltransferase (339 aa).

The protein belongs to the PlsX family. Homodimer. Probably interacts with PlsY.

Its subcellular location is the cytoplasm. The enzyme catalyses a fatty acyl-[ACP] + phosphate = an acyl phosphate + holo-[ACP]. It participates in lipid metabolism; phospholipid metabolism. In terms of biological role, catalyzes the reversible formation of acyl-phosphate (acyl-PO(4)) from acyl-[acyl-carrier-protein] (acyl-ACP). This enzyme utilizes acyl-ACP as fatty acyl donor, but not acyl-CoA. This is Putative phosphate acyltransferase from Clostridium perfringens (strain 13 / Type A).